Reading from the N-terminus, the 2346-residue chain is MDEPSPLAQPLELNQHSRFIIGSVSEDNSEDEISNLVKLDLLEEKEGSLSPASVGSDTLSDLGISSLQDGLALHIRSSMSGLHLVKQGRDRKKIDSQRDFTVASPAEFVTRFGGNKVIEKVLIANNGIAAVKCMRSIRRWSYEMFRNERAIRFVVMVTPEDLKANAEYIKMADHYVPVPGGPNNNNYANVELILDIAKRIPVQAVWAGWGHASENPKLPELLLKNGIAFMGPPSQAMWALGDKIASSIVAQTAGIPTLPWSGSGLRVDWQENDFSKRILNVPQELYEKGYVKDVDDGLQAAEEVGYPVMIKASEGGGGKGIRKVNNADDFPNLFRQVQAEVPGSPIFVMRLAKQSRHLEVQILADQYGNAISLFGRDCSVQRRHQKIIEEAPATIATPAVFEHMEQCAVKLAKMVGYVSAGTVEYLYSQDGSFYFLELNPRLQVEHPCTEMVADVNLPAAQLQIAMGIPLYRIKDIRMMYGVSPWGDSPIDFEDSAHVPCPRGHVIAARITSENPDEGFKPSSGTVQELNFRSNKNVWGYFSVAAAGGLHEFADSQFGHCFSWGENREEAISNMVVALKELSIRGDFRTTVEYLIKLLETESFQMNRIDTGWLDRLIAEKVQAERPDTMLGVVCGALHVADVSLRNSVSNFLHSLERGQVLPAHTLLNTVDVELIYEGVKYVLKVTRQSPNSYVVIMNGSCVEVDVHRLSDGGLLLSYDGSSYTTYMKEEVDRYRITIGNKTCVFEKENDPSVMRSPSAGKLIQYIVEDGGHVFAGQCYAEIEVMKMVMTLTAVESGCIHYVKRPGAALDPGCVLAKMQLDNPSKVQQAELHTGSLPRIQSTALRGEKLHRVFHYVLDNLVNVMNGYCLPDPFFSSKVKDWVERLMKTLRDPSLPLLELQDIMTSVSGRIPPNVEKSIKKEMAQYASNITSVLCQFPSQQIANILDSHAATLNRKSEREVFFMNTQSIVQLVQRYRSGIRGHMKAVVMDLLRQYLRVETQFQNGHYDKCVFALREENKSDMNTVLNYIFSHAQVTKKNLLVTMLIDQLCGRDPTLTDELLNILTELTQLSKTTNAKVALRARQVLIASHLPSYELRHNQVESIFLSAIDMYGHQFCIENLQKLILSETSIFDVLPNFFYHSNQVVRMAALEVYVRRAYIAYELNSVQHRQLKDNTCVVEFQFMLPTSHPNRGNIPTLNRMSFSSNLNHYGMTHVASVSDVLLDNSFTPPCQRMGGMVSFRTFEDFVRIFDEVMGCFSDSPPQSPTFPEAGHTSLYDEDKVPRDEPIHILNVAIKTDCDIEDDRLAAMFREFTQQNKATLVDHGIRRLTFLVAQKDFRKQVNYEVDRRFHREFPKFFTFRARDKFEEDRIYRHLEPALAFQLELNRMRNFDLTAIPCANHKMHLYLGAAKVEVGTEVTDYRFFVRAIIRHSDLVTKEASFEYLQNEGERLLLEAMDELEVAFNNTNVRTDCNHIFLNFVPTVIMDPSKIEESVRSMVMRYGSRLWKLRVLQAELKINIRLTPTGKAIPIRLFLTNESGYYLDISLYKEVTDSRTAQIMFQAYGDKQGPLHGMLINTPYVTKDLLQSKRFQAQSLGTTYIYDIPEMFRQSLIKLWESMSTQAFLPSPPLPSDMLTYTELVLDDQGQLVHMNRLPGGNEIGMVAWKMTFKSPEYPEGRDIIVIGNDITYRIGSFGPQEDLLFLRASELARAEGIPRIYVSANSGARIGLAEEIRHMFHVAWVDPEDPYKGYRYLYLTPQDYKRVSALNSVHCEHVEDEGESRYKITDIIGKEEGIGPENLRGSGMIAGESSLAYNEIITISLVTCRAIGIGAYLVRLGQRTIQVENSHLILTGAGALNKVLGREVYTSNNQLGGIQIMHNNGVTHCTVCDDFEGVFTVLHWLSYMPKSVHSSVPLLNSKDPIDRIIEFVPTKTPYDPRWMLAGRPHPTQKGQWLSGFFDYGSFSEIMQPWAQTVVVGRARLGGIPVGVVAVETRTVELSIPADPANLDSEAKIIQQAGQVWFPDSAFKTYQAIKDFNREGLPLMVFANWRGFSGGMKDMYDQVLKFGAYIVDGLRECCQPVLVYIPPQAELRGGSWVVIDSSINPRHMEMYADRESRGSVLEPEGTVEIKFRRKDLVKTMRRVDPVYIHLAERLGTPELSTAERKELENKLKEREEFLIPIYHQVAVQFADLHDTPGRMQEKGVISDILDWKTSRTFFYWRLRRLLLEDLVKKKIHNANPELTDGQIQAMLRRWFVEVEGTVKAYVWDNNKDLAEWLEKQLTEEDGVHSVIEENIKCISRDYVLKQIRSLVQANPEVAMDSIIHMTQHISPTQRAEVIRILSTMDSPST.

The residue at position 1 (Met1) is an N-acetylmethionine. Residues Ser5, Ser23, Ser25, Ser29, Ser34, Ser48, Ser50, and Ser53 each carry the phosphoserine modification. At Thr58 the chain carries Phosphothreonine. Phosphoserine is present on residues Ser78 and Ser80. Positions 117-618 constitute a Biotin carboxylation domain; that stretch reads VIEKVLIANN…DTGWLDRLIA (502 aa). An ATP-grasp domain is found at 275 to 466; the sequence is SKRILNVPQE…LPAAQLQIAM (192 aa). ATP is bound at residue 315–320; that stretch reads GGGGKG. Glu424, Glu437, and Asn439 together coordinate Mg(2+). 3 residues coordinate Mn(2+): Glu424, Glu437, and Asn439. The active site involves Arg441. Ser488 carries the phosphoserine modification. The residue at position 610 (Thr610) is a Phosphothreonine. A Biotinyl-binding domain is found at 745 to 819; the sequence is FEKENDPSVM…DPGCVLAKMQ (75 aa). Position 786 is an N6-biotinyllysine (Lys786). 4 positions are modified to phosphoserine: Ser835, Ser1201, Ser1216, and Ser1218. A Phosphothreonine modification is found at Thr1227. Residues Ser1259, Ser1263, and Ser1273 each carry the phosphoserine modification. N6-acetyllysine is present on Lys1334. Residues 1576-1914 enclose the CoA carboxyltransferase N-terminal domain; that stretch reads PYVTKDLLQS…SVHSSVPLLN (339 aa). Residues 1576–2234 are carboxyltransferase; it reads PYVTKDLLQS…EDLVKKKIHN (659 aa). The CoA site is built by Arg1823, Lys2127, and Arg2129. Residues 1918–2234 enclose the CoA carboxyltransferase C-terminal domain; the sequence is PIDRIIEFVP…EDLVKKKIHN (317 aa). Thr2153 is modified (phosphothreonine).

In terms of assembly, monomer, homodimer, and homotetramer. Can form filamentous polymers. Interacts in its inactive phosphorylated form with the BRCT domains of BRCA1 which prevents ACACA dephosphorylation and inhibits lipid synthesis. Interacts with MID1IP1; interaction with MID1IP1 promotes oligomerization and increases its activity. It depends on Mg(2+) as a cofactor. Mn(2+) serves as cofactor. Biotin is required as a cofactor. In terms of processing, phosphorylation on Ser-1263 is required for interaction with BRCA1. Phosphorylation at Ser-80 by AMPK inactivates enzyme activity. Post-translationally, the biotin cofactor is covalently attached to the central biotinyl-binding domain and is required for the catalytic activity. As to expression, expressed in brain, placenta, skeletal muscle, renal, pancreatic and adipose tissues; expressed at low level in pulmonary tissue; not detected in the liver.

The protein resides in the cytoplasm. It is found in the cytosol. It catalyses the reaction hydrogencarbonate + acetyl-CoA + ATP = malonyl-CoA + ADP + phosphate + H(+). It participates in lipid metabolism; malonyl-CoA biosynthesis; malonyl-CoA from acetyl-CoA: step 1/1. Inhibited by phosphorylation. Citrate promotes oligomerization of the protein into filaments that correspond to the most active form of the carboxylase. Inhibited by palmitoyl-CoA. Cytosolic enzyme that catalyzes the carboxylation of acetyl-CoA to malonyl-CoA, the first and rate-limiting step of de novo fatty acid biosynthesis. This is a 2 steps reaction starting with the ATP-dependent carboxylation of the biotin carried by the biotin carboxyl carrier (BCC) domain followed by the transfer of the carboxyl group from carboxylated biotin to acetyl-CoA. This is Acetyl-CoA carboxylase 1 from Homo sapiens (Human).